Consider the following 264-residue polypeptide: Ribosomal protein L11 methyltransferase (264 aa).

Positions 116, 137, 159, and 200 each coordinate S-adenosyl-L-methionine.

It belongs to the methyltransferase superfamily. PrmA family.

It localises to the cytoplasm. It carries out the reaction L-lysyl-[protein] + 3 S-adenosyl-L-methionine = N(6),N(6),N(6)-trimethyl-L-lysyl-[protein] + 3 S-adenosyl-L-homocysteine + 3 H(+). Functionally, methylates ribosomal protein L11. The protein is Ribosomal protein L11 methyltransferase of Thermotoga maritima (strain ATCC 43589 / DSM 3109 / JCM 10099 / NBRC 100826 / MSB8).